Consider the following 203-residue polypeptide: Small ribosomal subunit protein uS4 (203 aa).

Residues 22–45 form a disordered region; sequence TGKELARRPYKPGQHGPNSRGKVS. Residues 93–156 form the S4 RNA-binding domain; sequence QRLDNVVYRL…QNISTIKEAV (64 aa).

The protein belongs to the universal ribosomal protein uS4 family. In terms of assembly, part of the 30S ribosomal subunit. Contacts protein S5. The interaction surface between S4 and S5 is involved in control of translational fidelity.

In terms of biological role, one of the primary rRNA binding proteins, it binds directly to 16S rRNA where it nucleates assembly of the body of the 30S subunit. With S5 and S12 plays an important role in translational accuracy. This chain is Small ribosomal subunit protein uS4, found in Enterococcus faecalis (strain ATCC 700802 / V583).